We begin with the raw amino-acid sequence, 165 residues long: Protein FAM219A (165 aa).

N-acetylmethionine is present on methionine 1. The segment at 1–114 is disordered; it reads MMEEIDRFQV…SRYSSSGYSS (114 aa). The span at 32-44 shows a compositional bias: basic and acidic residues; sequence CDAREEKQRELAR. The segment covering 49–63 has biased composition (polar residues); that stretch reads KNGSMGSPVNQQPKK. Serine 55 and serine 85 each carry phosphoserine. Threonine 96 is subject to Phosphothreonine. 2 positions are modified to phosphoserine: serine 98 and serine 105. Residues 105-114 show a composition bias toward low complexity; sequence SRYSSSGYSS.

It belongs to the FAM219 family.

This chain is Protein FAM219A (FAM219A), found in Macaca fascicularis (Crab-eating macaque).